Reading from the N-terminus, the 338-residue chain is N-acetylmuramate/N-acetylglucosamine kinase (338 aa).

This sequence belongs to the kinase AmgK family.

It catalyses the reaction N-acetyl-D-muramate + ATP = N-acetyl-alpha-D-muramate 1-phosphate + ADP + H(+). It carries out the reaction N-acetyl-D-glucosamine + ATP = N-acetyl-alpha-D-glucosamine 1-phosphate + ADP + H(+). It participates in cell wall biogenesis; peptidoglycan recycling. Its function is as follows. Sugar kinase that catalyzes the ATP-dependent phosphorylation of N-acetylmuramate (MurNAc) and N-acetylglucosamine (GlcNAc) at its C1 hydroxyl group, leading to MurNAc alpha-1P and GlcNAc alpha-1P, respectively. Is involved in peptidoglycan recycling as part of a cell wall recycling pathway that bypasses de novo biosynthesis of the peptidoglycan precursor UDP-MurNAc. Plays a role in intrinsic resistance to fosfomycin, which targets the de novo synthesis of UDP-MurNAc. The chain is N-acetylmuramate/N-acetylglucosamine kinase from Pseudomonas aeruginosa (strain ATCC 15692 / DSM 22644 / CIP 104116 / JCM 14847 / LMG 12228 / 1C / PRS 101 / PAO1).